We begin with the raw amino-acid sequence, 874 residues long: Alanine--tRNA ligase (874 aa).

4 residues coordinate Zn(2+): His-562, His-566, Cys-663, and His-667.

It belongs to the class-II aminoacyl-tRNA synthetase family. Requires Zn(2+) as cofactor.

The protein localises to the cytoplasm. The catalysed reaction is tRNA(Ala) + L-alanine + ATP = L-alanyl-tRNA(Ala) + AMP + diphosphate. Functionally, catalyzes the attachment of alanine to tRNA(Ala) in a two-step reaction: alanine is first activated by ATP to form Ala-AMP and then transferred to the acceptor end of tRNA(Ala). Also edits incorrectly charged Ser-tRNA(Ala) and Gly-tRNA(Ala) via its editing domain. The chain is Alanine--tRNA ligase from Bordetella pertussis (strain Tohama I / ATCC BAA-589 / NCTC 13251).